The following is an 821-amino-acid chain: MSPWLKWHGPAMARLWGLCLLVLGFWRASLACPTSCKCSSARIWCTEPSPGIVAFPRLEPNSVDPENITEILIANQKRLEIINEDDVEAYVGLRNLTIVDSGLKFVAYKAFLKNSNLRHINFTRNKLTSLSRRHFRHLDLSDLILTGNPFTCSCDIMWLKTLQETKSSPDTQDLYCLNESSKNMPLANLQIPNCGLPSARLAAPNLTVEEGKSVTLSCSVGGDPLPTLYWDVGNLVSKHMNETSHTQGSLRITNISSDDSGKQISCVAENLVGEDQDSVNLTVHFAPTITFLESPTSDHHWCIPFTVRGNPKPALQWFYNGAILNESKYICTKIHVTNHTEYHGCLQLDNPTHMNNGDYTLMAKNEYGKDERQISAHFMGRPGVDYETNPNYPEVLYEDWTTPTDIGDTTNKSNEIPSTDVADQSNREHLSVYAVVVIASVVGFCLLVMLLLLKLARHSKFGMKGPASVISNDDDSASPLHHISNGSNTPSSSEGGPDAVIIGMTKIPVIENPQYFGITNSQLKPDTFVQHIKRHNIVLKRELGEGAFGKVFLAECYNLCPEQDKILVAVKTLKDASDNARKDFHREAELLTNLQHEHIVKFYGVCVEGDPLIMVFEYMKHGDLNKFLRAHGPDAVLMAEGNPPTELTQSQMLHIAQQIAAGMVYLASQHFVHRDLATRNCLVGENLLVKIGDFGMSRDVYSTDYYRVGGHTMLPIRWMPPESIMYRKFTTESDVWSLGVVLWEIFTYGKQPWYQLSNNEVIECITQGRVLQRPRTCPQEVYELMLGCWQREPHTRKNIKSIHTLLQNLAKASPVYLDILG.

Positions 1-31 (MSPWLKWHGPAMARLWGLCLLVLGFWRASLA) are cleaved as a signal peptide. Intrachain disulfides connect Cys-32/Cys-38 and Cys-36/Cys-45. The LRRNT domain maps to 32–61 (CPTSCKCSSARIWCTEPSPGIVAFPRLEPN). Residues 32–429 (CPTSCKCSSA…DVADQSNREH (398 aa)) lie on the Extracellular side of the membrane. Residues Asn-67, Asn-95, and Asn-121 are each glycosylated (N-linked (GlcNAc...) asparagine). LRR repeat units follow at residues 92–113 (GLRN…AFLK) and 116–137 (NLRH…HFRH). Positions 148–196 (NPFTCSCDIMWLKTLQETKSSPDTQDLYCLNESSKNMPLANLQIPNCGL) constitute an LRRCT domain. 2 cysteine pairs are disulfide-bonded: Cys-152/Cys-176 and Cys-154/Cys-194. Asn-178, Asn-205, Asn-241, Asn-254, Asn-280, Asn-325, Asn-338, Asn-350, and Asn-411 each carry an N-linked (GlcNAc...) asparagine glycan. 2 Ig-like C2-type domains span residues 197 to 282 (PSAR…VNLT) and 301 to 365 (WCIP…MAKN). A disulfide bond links Cys-218 and Cys-266. Cys-302 and Cys-345 are joined by a disulfide. A helical transmembrane segment spans residues 430–453 (LSVYAVVVIASVVGFCLLVMLLLL). The tract at residues 454–465 (KLARHSKFGMKG) is interaction with MAPK8IP3/JIP3. Topologically, residues 454 to 821 (KLARHSKFGM…ASPVYLDILG (368 aa)) are cytoplasmic. A disordered region spans residues 474 to 497 (DDSASPLHHISNGSNTPSSSEGGP). The span at 484–494 (SNGSNTPSSSE) shows a compositional bias: polar residues. Tyr-515 is modified (phosphotyrosine). Positions 537 to 806 (IVLKRELGEG…KNIKSIHTLL (270 aa)) constitute a Protein kinase domain. ATP is bound by residues 543 to 551 (LGEGAFGKV) and Lys-571. Catalysis depends on Asp-675, which acts as the Proton acceptor. Tyr-701, Tyr-705, Tyr-706, and Tyr-816 each carry phosphotyrosine; by autocatalysis.

Belongs to the protein kinase superfamily. Tyr protein kinase family. Insulin receptor subfamily. Exists in a dynamic equilibrium between monomeric (low affinity) and dimeric (high affinity) structures. Interacts (phosphorylated upon activation by BDNF) with SHC1; mediates SHC1 phosphorylation and activation. Interacts (phosphorylated upon activation by BDNF) with PLCG1 and/or PLCG2; mediates PLCG1 phosphorylation and activation. Interacts with SH2B1 and SH2B2. Interacts with NGFR; may regulate the ligand specificity of the receptor. Interacts with SORCS2; this interaction is important for normal targeting to post-synaptic densities in response to high-frequency stimulation. Interacts (phosphorylated upon ligand-binding) with SH2D1A; regulates NTRK2. Interacts with SQSTM1 and KIDINS220. Interacts (phosphorylated upon ligand-binding) with FRS2; activates the MAPK signaling pathway. Interacts with APPL1. Interacts with MAPK8IP3/JIP3 and KLC1; interaction with KLC1 is mediated by MAPK8IP3/JIP3. Interacts with SORL1; this interaction facilitates NTRK2 trafficking between synaptic plasma membranes, postsynaptic densities and cell soma, hence positively regulates BDNF signaling. Interacts with SLITRK2. Post-translationally, phosphorylated. Undergoes ligand-mediated autophosphorylation that is required for interaction with SHC1 and PLCG1 and other downstream effectors. Some isoforms are not phosphorylated. Ubiquitinated. Undergoes polyubiquitination upon activation; regulated by NGFR. Ubiquitination regulates the internalization of the receptor. As to expression, expressed in the brain, in neurons (at protein level). Detected in hippocampus (at protein level). Widely expressed in the central and peripheral nervous system. The different forms are differentially expressed in various cell types. Isoform GP95-TRKB is specifically expressed in glial cells.

The protein resides in the cell membrane. It is found in the endosome membrane. It localises to the early endosome membrane. Its subcellular location is the cell projection. The protein localises to the axon. The protein resides in the dendrite. It is found in the cytoplasm. It localises to the perinuclear region. Its subcellular location is the postsynaptic density. It carries out the reaction L-tyrosyl-[protein] + ATP = O-phospho-L-tyrosyl-[protein] + ADP + H(+). Its activity is regulated as follows. The formation of active receptors dimers able to fully transduce the ligand-mediated signal, may be negatively regulated by the formation of inactive heterodimers with the non-catalytic isoforms. The neuronal activity and the influx of calcium positively regulate the kinase activity and the internalization of the receptor which are both important for active signaling. Regulated by NGFR that may control the internalization of the receptor. NGFR may also stimulate the activation by BDNF compared to NTF3 and NTF4. SH2D1A inhibits the autophosphorylation of the receptor, and alters the recruitment and activation of downstream effectors and signaling cascades. Functionally, receptor tyrosine kinase involved in the development and the maturation of the central and the peripheral nervous systems through regulation of neuron survival, proliferation, migration, differentiation, and synapse formation and plasticity. Receptor for BDNF/brain-derived neurotrophic factor and NTF4/neurotrophin-4. Alternatively can also bind NTF3/neurotrophin-3 which is less efficient in activating the receptor but regulates neuron survival through NTRK2. Upon ligand-binding, undergoes homodimerization, autophosphorylation and activation. Recruits, phosphorylates and/or activates several downstream effectors including SHC1, FRS2, SH2B1, SH2B2 and PLCG1 that regulate distinct overlapping signaling cascades. Through SHC1, FRS2, SH2B1, SH2B2 activates the GRB2-Ras-MAPK cascade that regulates for instance neuronal differentiation including neurite outgrowth. Through the same effectors controls the Ras-PI3 kinase-AKT1 signaling cascade that mainly regulates growth and survival. Through PLCG1 and the downstream protein kinase C-regulated pathways controls synaptic plasticity. Thereby, plays a role in learning and memory by regulating both short term synaptic function and long-term potentiation. PLCG1 also leads to NF-Kappa-B activation and the transcription of genes involved in cell survival. Hence, it is able to suppress anoikis, the apoptosis resulting from loss of cell-matrix interactions. Isoform GP95-TRKB may also play a role in neutrophin-dependent calcium signaling in glial cells and mediate communication between neurons and glia. The chain is BDNF/NT-3 growth factors receptor from Mus musculus (Mouse).